A 2439-amino-acid chain; its full sequence is Protein roller-3 (2439 aa).

The signal sequence occupies residues 1-26; it reads MLDFPRFSLFLFLLFSSFLFSSFVHA. Residues 27 to 1851 are Extracellular-facing; that stretch reads ATVFSSSLKT…EEEKGGILPY (1825 aa). Asparagine 64, asparagine 182, asparagine 334, asparagine 394, asparagine 496, asparagine 533, asparagine 657, asparagine 766, asparagine 868, asparagine 1003, asparagine 1036, asparagine 1090, and asparagine 1261 each carry an N-linked (GlcNAc...) asparagine glycan. The Fibronectin type-III 1 domain maps to 618–720; it reads KPRIVAVSSI…STSNTALPDL (103 aa). 4 Fibronectin type-III domains span residues 1403–1503, 1507–1628, 1629–1732, and 1738–1843; these read SKGI…TGFG, APRD…TLDV, PGTL…IQQA, and VPTA…EKEE. 4 N-linked (GlcNAc...) asparagine glycosylation sites follow: asparagine 1567, asparagine 1636, asparagine 1677, and asparagine 1779. The helical transmembrane segment at 1852-1872 threads the bilayer; that stretch reads FLGISIILLLAAMILVGCFWL. Topologically, residues 1873–2439 are cytoplasmic; that stretch reads KSRRRQQMKK…GGTCRSVSQV (567 aa). One can recognise a Protein kinase domain in the interval 1928–2199; the sequence is VEIVRHISDC…ATILKIFETC (272 aa). Residues 1934–1942 and lysine 1963 each bind ATP; that span reads ISDCSYGSV. Disordered stretches follow at residues 2214 to 2277, 2315 to 2348, and 2412 to 2439; these read NEGS…RPAT, SQRP…NRTN, and HLRA…VSQV. 3 stretches are compositionally biased toward polar residues: residues 2216–2233, 2334–2347, and 2420–2439; these read GSDN…SSRE, ATSS…SNRT, and PPTR…VSQV.

It localises to the membrane. Involved in larval development and locomotion. This is Protein roller-3 from Caenorhabditis briggsae.